Consider the following 177-residue polypeptide: Eggshell protein (177 aa).

The N-terminal stretch at 1–18 is a signal peptide; the sequence is MKQSLTLVFLVAIGYATA. Repeat copies occupy residues 25–41, 42–59, 60–75, 76–91, and 92–112. Positions 25–112 are 5 X approximate tandem repeats; the sequence is YSGGYGGGCY…GCSGGNCGGG (88 aa). Over residues 149 to 166 the composition is skewed to gly residues; the sequence is GSGKGKGGGKGGKGGKGG. The segment at 149 to 177 is disordered; the sequence is GSGKGKGGGKGGKGGKGGTYKPSHYGGGY.

The protein is Eggshell protein of Schistosoma mansoni (Blood fluke).